We begin with the raw amino-acid sequence, 95 residues long: Osteocalcin (95 aa).

The N-terminal stretch at 1 to 23 is a signal peptide; the sequence is MRTIFLLTLLTLAALCLSDLTDA. A propeptide spanning residues 24–49 is cleaved from the precursor; the sequence is KPSGPESDKAFMSKQEGNKVVNRLRR. Residues 46–92 enclose the Gla domain; the sequence is RLRRYLGASVPSPDPLEPTREQCELNPACDELSDQYGLKTAYKRIYG. Glutamate 62, glutamate 66, glutamate 69, and aspartate 75 together coordinate Ca(2+). 4-carboxyglutamate occurs at positions 62, 66, and 69. Cysteine 68 and cysteine 74 form a disulfide bridge.

It belongs to the osteocalcin/matrix Gla protein family. Gamma-carboxyglutamate residues are formed by vitamin K dependent carboxylation by GGCX. These residues are essential for the binding of calcium. Carboxylated in a Ptprv/Esp-dependent process. Decarboxylation promotes the hormone activity. Bone.

Its subcellular location is the secreted. The carboxylated form is one of the main organic components of the bone matrix, which constitutes 1-2% of the total bone protein: it acts as a negative regulator of bone formation and is required to limit bone formation without impairing bone resorption or mineralization. The carboxylated form binds strongly to apatite and calcium. Its function is as follows. The uncarboxylated form acts as a hormone secreted by osteoblasts, which regulates different cellular processes, such as energy metabolism, male fertility and brain development. Regulates of energy metabolism by acting as a hormone favoring pancreatic beta-cell proliferation, insulin secretion and sensitivity and energy expenditure. Uncarboxylated osteocalcin hormone also promotes testosterone production in the testes: acts as a ligand for G protein-coupled receptor GPRC6A at the surface of Leydig cells, initiating a signaling response that promotes the expression of enzymes required for testosterone synthesis in a CREB-dependent manner. Also acts as a regulator of brain development: osteocalcin hormone crosses the blood-brain barrier and acts as a ligand for GPR158 on neurons, initiating a signaling response that prevents neuronal apoptosis in the hippocampus, favors the synthesis of all monoamine neurotransmitters and inhibits that of gamma-aminobutyric acid (GABA). Osteocalcin also crosses the placenta during pregnancy and maternal osteocalcin is required for fetal brain development. The sequence is that of Osteocalcin from Mus musculus (Mouse).